The following is a 65-amino-acid chain: Large ribosomal subunit protein bL28 (65 aa).

The interval M1–K26 is disordered. The segment covering K17 to K26 has biased composition (basic residues).

It belongs to the bacterial ribosomal protein bL28 family.

This chain is Large ribosomal subunit protein bL28, found in Mycoplasma mobile (strain ATCC 43663 / 163K / NCTC 11711) (Mesomycoplasma mobile).